A 204-amino-acid polypeptide reads, in one-letter code: Methylthioribulose-1-phosphate dehydratase (204 aa).

Residues His-94 and His-96 each contribute to the Zn(2+) site.

This sequence belongs to the aldolase class II family. MtnB subfamily. Zn(2+) is required as a cofactor.

It carries out the reaction 5-(methylsulfanyl)-D-ribulose 1-phosphate = 5-methylsulfanyl-2,3-dioxopentyl phosphate + H2O. It participates in amino-acid biosynthesis; L-methionine biosynthesis via salvage pathway; L-methionine from S-methyl-5-thio-alpha-D-ribose 1-phosphate: step 2/6. Functionally, catalyzes the dehydration of methylthioribulose-1-phosphate (MTRu-1-P) into 2,3-diketo-5-methylthiopentyl-1-phosphate (DK-MTP-1-P). The polypeptide is Methylthioribulose-1-phosphate dehydratase (Serratia proteamaculans (strain 568)).